The sequence spans 370 residues: Flagellar P-ring protein (370 aa).

An N-terminal signal peptide occupies residues 1–27; sequence MPARPIPVPLLALALAAALAVPSPAAA.

It belongs to the FlgI family. The basal body constitutes a major portion of the flagellar organelle and consists of four rings (L,P,S, and M) mounted on a central rod.

It is found in the periplasm. Its subcellular location is the bacterial flagellum basal body. Its function is as follows. Assembles around the rod to form the L-ring and probably protects the motor/basal body from shearing forces during rotation. This is Flagellar P-ring protein from Anaeromyxobacter sp. (strain K).